The primary structure comprises 359 residues: sn-1 acyl-lipid omega-3 desaturase (ferredoxin) (359 aa).

Polar residues predominate over residues 1–15; that stretch reads MQLDTISFNNPLNSE. Residues 1 to 20 form a disordered region; that stretch reads MQLDTISFNNPLNSETSEDT. 2 helical membrane-spanning segments follow: residues 47–67 and 70–90; these read LFYF…ASYL and WLFF…LFVV. The Histidine box-1 signature appears at 92 to 96; it reads HDCGH. A Histidine box-2 motif is present at residues 128–132; that stretch reads HRTHH. 2 consecutive transmembrane segments (helical) span residues 207-227 and 228-248; these read VLLI…GWMW and LLKY…LVTF. The Histidine box-3 signature appears at 294 to 298; it reads HHIFL.

Belongs to the fatty acid desaturase type 2 family. Fe(2+) serves as cofactor.

The protein resides in the membrane. It carries out the reaction a 1-[(9Z,12Z)-octadecdienoyl]-2-acyl-glycerolipid + 2 reduced [2Fe-2S]-[ferredoxin] + O2 + 2 H(+) = a 1-[(9Z,12Z,15Z)-octadectrienoyl]-2-acyl-glycerolipid + 2 oxidized [2Fe-2S]-[ferredoxin] + 2 H2O. The catalysed reaction is a 1-[(6Z,9Z,12Z)-octadectrienoyl]-2-acyl-glycerolipid + 2 reduced [2Fe-2S]-[ferredoxin] + O2 + 2 H(+) = a 1-[(6Z,9Z,12Z,15Z)-octadectetraenoyl]-2-acyl-glycerolipid + 2 oxidized [2Fe-2S]-[ferredoxin] + 2 H2O. Its pathway is lipid metabolism; polyunsaturated fatty acid biosynthesis. In terms of biological role, desaturase involved in fatty acid biosynthesis. Introduces a double bond at carbon 15 of linoleoyl and gamma-linolenoyl groups attached to the sn-1 position of the glycerol moiety of membrane glycerolipids. This chain is sn-1 acyl-lipid omega-3 desaturase (ferredoxin), found in Nostoc sp. (strain 36).